The sequence spans 250 residues: MIENKVELVAELVLESIGKTEVVSRHTEGTKSCQVSFRIKDSPSEKGSTSFLSELVVIQTLDDNDKYTVVIRHGTSITMACVVGYSDFKLPTELKWPLERESLPVEPDLKPIMTQLKRQTAGSADMPKFDDEYQAQARQNQGTAPLNPYPGLTVTEPSFANPAGGYADGDLYPVGTSHPDWSGGLPNPLGNPSSQGGMIFDPNRRPAPRREDMPPGWMPGSKYDEPFGPGSGGFGGSGSGGFGGSGSGFI.

The disordered stretch occupies residues proline 179–isoleucine 250. A compositionally biased stretch (basic and acidic residues) spans proline 202–methionine 213. Residues proline 229 to isoleucine 250 are compositionally biased toward gly residues.

It belongs to the proteasome inhibitor PI31 family. Interacts with the 20S proteasome.

In terms of biological role, plays a role in the establishment of transcriptional silencing boundaries, preventing the propagation of heterochromatic silencing. The polypeptide is Silencing boundary-establishment protein FUB1 (Saccharomyces cerevisiae (strain ATCC 204508 / S288c) (Baker's yeast)).